The following is a 497-amino-acid chain: Probable cytosol aminopeptidase (497 aa).

Positions 267 and 272 each coordinate Mn(2+). Residue Lys-279 is part of the active site. Residues Asp-290, Asp-349, and Glu-351 each contribute to the Mn(2+) site. The active site involves Arg-353.

This sequence belongs to the peptidase M17 family. Mn(2+) serves as cofactor.

The protein resides in the cytoplasm. The enzyme catalyses Release of an N-terminal amino acid, Xaa-|-Yaa-, in which Xaa is preferably Leu, but may be other amino acids including Pro although not Arg or Lys, and Yaa may be Pro. Amino acid amides and methyl esters are also readily hydrolyzed, but rates on arylamides are exceedingly low.. The catalysed reaction is Release of an N-terminal amino acid, preferentially leucine, but not glutamic or aspartic acids.. Presumably involved in the processing and regular turnover of intracellular proteins. Catalyzes the removal of unsubstituted N-terminal amino acids from various peptides. The protein is Probable cytosol aminopeptidase of Nitrosomonas europaea (strain ATCC 19718 / CIP 103999 / KCTC 2705 / NBRC 14298).